A 225-amino-acid polypeptide reads, in one-letter code: Ribonuclease T (225 aa).

The interval 1–21 (MSEDHFDEEHEGHGGGGGSRH) is disordered. In terms of domain architecture, Exonuclease spans 33-207 (VVVDVETGGF…YDTEKTAELF (175 aa)). Asp36, Glu38, His194, and Asp199 together coordinate Mg(2+). His194 functions as the Proton donor/acceptor in the catalytic mechanism.

This sequence belongs to the RNase T family. Homodimer. The cofactor is Mg(2+).

Functionally, trims short 3' overhangs of a variety of RNA species, leaving a one or two nucleotide 3' overhang. Responsible for the end-turnover of tRNA: specifically removes the terminal AMP residue from uncharged tRNA (tRNA-C-C-A). Also appears to be involved in tRNA biosynthesis. This Pseudomonas syringae pv. tomato (strain ATCC BAA-871 / DC3000) protein is Ribonuclease T.